Reading from the N-terminus, the 1169-residue chain is Phospholipid-transporting ATPase IF (1169 aa).

The Cytoplasmic segment spans residues 1–47 (LGFDPPHQSDTRTIYIANRFPQNGLYTPQKFIDNRIISSKYTVWNFV). Residues 48 to 69 (PKNLFEQFRRVANFYFLIIFLV) form a helical membrane-spanning segment. Residues 70–74 (QLMID) lie on the Extracellular side of the membrane. A helical transmembrane segment spans residues 75 to 96 (TPTSPITSGLPLFFVITVTAIK). Over 97–281 (QGYEDWLRHN…SAVEKSMNTF (185 aa)) the chain is Cytoplasmic. The chain crosses the membrane as a helical span at residues 282-303 (LIIYLIILISEAIISTILKYTW). The Extracellular portion of the chain corresponds to 304 to 333 (QAEEKWDEPWYNQKTEHQRNSSKILRFISD). Residues 334-351 (FLAFLVLYNFIIPISLYV) form a helical membrane-spanning segment. Residues 352–868 (TVEMQKFLGS…HGHFYYIRIA (517 aa)) lie on the Cytoplasmic side of the membrane. Aspartate 399 serves as the catalytic 4-aspartylphosphate intermediate. 12 residues coordinate ATP: aspartate 399, lysine 400, threonine 401, glutamate 523, phenylalanine 564, lysine 587, arginine 618, threonine 698, glycine 699, aspartate 700, arginine 786, and lysine 792. Aspartate 399 contributes to the Mg(2+) binding site. Threonine 401 provides a ligand contact to Mg(2+). The segment at 794–802 (KVIRLIKIS) is required for binding to the RING-finger of HLTF. Aspartate 813 is a binding site for Mg(2+). Residues asparagine 816 and aspartate 817 each contribute to the ATP site. Mg(2+) is bound at residue aspartate 817. Residues 869 to 890 (TLVQYFFYKNVCFITPQFLYQF) traverse the membrane as a helical segment. Residues 891-902 (YCLFSQQTLYDS) are Extracellular-facing. The helical transmembrane segment at 903 to 922 (VYLTLYNICFTSLPILIYSL) threads the bilayer. Over 923 to 952 (LEQHIDPHILQNKPTLYRDISKNRLLSIKT) the chain is Cytoplasmic. The chain crosses the membrane as a helical span at residues 953–974 (FLYWTILGFSRSFIFLFGSYFL). The Extracellular portion of the chain corresponds to 975 to 989 (IGKDASLLGNGQMFG). A helical membrane pass occupies residues 990 to 1012 (NWTFGTLVFTVMVITVTVKMALE). At 1013-1017 (THFWT) the chain is on the cytoplasmic side. The chain crosses the membrane as a helical span at residues 1018–1039 (WINHLVTWGSIIFYFVFSLFYG). The Extracellular portion of the chain corresponds to 1040–1057 (GILWPFLGSQNMYFVFIQ). Residues 1058–1082 (LVSSGSAWFAIILMVVTCLFLDVMK) traverse the membrane as a helical segment. The Cytoplasmic portion of the chain corresponds to 1083-1169 (KVFDRQLHPT…TLSTMDSSTC (87 aa)). Serine 1146 carries the post-translational modification Phosphoserine.

This sequence belongs to the cation transport ATPase (P-type) (TC 3.A.3) family. Type IV subfamily. Component of a P4-ATPase flippase complex which consists of a catalytic alpha subunit ATP11B and an accessory beta subunit TMEM30A. As to quaternary structure, interacts with HLTF (via the RING-finger). The cofactor is Mg(2+). Ubiquitously expressed.

The protein resides in the recycling endosome membrane. It is found in the early endosome. It localises to the endoplasmic reticulum. Its subcellular location is the golgi apparatus. The protein localises to the trans-Golgi network. The protein resides in the nucleus inner membrane. It catalyses the reaction ATP + H2O + phospholipidSide 1 = ADP + phosphate + phospholipidSide 2.. The enzyme catalyses a 1,2-diacyl-sn-glycero-3-phospho-L-serine(out) + ATP + H2O = a 1,2-diacyl-sn-glycero-3-phospho-L-serine(in) + ADP + phosphate + H(+). It carries out the reaction a 1,2-diacyl-sn-glycero-3-phosphoethanolamine(out) + ATP + H2O = a 1,2-diacyl-sn-glycero-3-phosphoethanolamine(in) + ADP + phosphate + H(+). Its function is as follows. Catalytic component of a P4-ATPase flippase complex which catalyzes the hydrolysis of ATP coupled to the transport of aminophospholipids, phosphatidylserines (PS) and phosphatidylethanolamines (PE), from the outer to the inner leaflet of intracellular membranes. May contribute to the maintenance of membrane lipid asymmetry in endosome compartment. Functionally, appears to play a role in the subnuclear trafficking of transcription factors with RING motifs. This chain is Phospholipid-transporting ATPase IF (ATP11B), found in Oryctolagus cuniculus (Rabbit).